The following is a 233-amino-acid chain: uncharacterized protein (233 aa).

The 69-residue stretch at 16–84 (KTLAKQVIER…TRGGTYFNDK (69 aa)) folds into the HTH gntR-type domain. Residues 44–63 (EMELMDILHVSRPVLREALS) constitute a DNA-binding region (H-T-H motif).

This is an uncharacterized protein from Bacillus subtilis (strain 168).